Reading from the N-terminus, the 214-residue chain is Thymidylate kinase (214 aa).

15-22 contributes to the ATP binding site; the sequence is GLEGAGKT.

The protein belongs to the thymidylate kinase family.

The enzyme catalyses dTMP + ATP = dTDP + ADP. Functionally, phosphorylation of dTMP to form dTDP in both de novo and salvage pathways of dTTP synthesis. This Haemophilus ducreyi (strain 35000HP / ATCC 700724) protein is Thymidylate kinase.